The primary structure comprises 910 residues: DnaJ-like protein MG200 homolog (910 aa).

The J domain maps to 4–73 (AKRDYYEVLG…RANYDKYGHD (70 aa)). 3 disordered regions span residues 102–160 (DNLS…DDIP), 260–408 (TEPS…LEQD), and 451–486 (VLSD…STAP). The segment covering 111–121 (KKEKTKTKKKG) has biased composition (basic residues). The span at 273–283 (DSDAVTAATTV) shows a compositional bias: low complexity. Residues 357–379 (SDEADATNEPTEQDTISEPEQET) are compositionally biased toward acidic residues. The segment covering 451 to 462 (VLSDQNPNPQTP) has biased composition (polar residues).

The sequence is that of DnaJ-like protein MG200 homolog from Mycoplasma pneumoniae (strain ATCC 29342 / M129 / Subtype 1) (Mycoplasmoides pneumoniae).